Here is a 188-residue protein sequence, read N- to C-terminus: Molybdopterin synthase catalytic subunit (188 aa).

Residues 1 to 14 (MATQPPQDQTSTTP) are compositionally biased toward low complexity. The tract at residues 1–23 (MATQPPQDQTSTTPSLPPHLDPT) is disordered. Residues 134–135 (HR), Lys-150, and 157–159 (KRE) each bind substrate.

The protein belongs to the MoaE family. MOCS2B subfamily. In terms of assembly, heterotetramer; composed of 2 small (MOCS2A) and 2 large (MOCS2B) subunits.

It is found in the cytoplasm. The catalysed reaction is 2 [molybdopterin-synthase sulfur-carrier protein]-C-terminal-Gly-aminoethanethioate + cyclic pyranopterin phosphate + H2O = molybdopterin + 2 [molybdopterin-synthase sulfur-carrier protein]-C-terminal Gly-Gly + 2 H(+). Its pathway is cofactor biosynthesis; molybdopterin biosynthesis. In terms of biological role, catalytic subunit of the molybdopterin synthase complex, a complex that catalyzes the conversion of precursor Z into molybdopterin. Acts by mediating the incorporation of 2 sulfur atoms from thiocarboxylated MOCS2A into precursor Z to generate a dithiolene group. This is Molybdopterin synthase catalytic subunit from Aspergillus fumigatus (strain ATCC MYA-4609 / CBS 101355 / FGSC A1100 / Af293) (Neosartorya fumigata).